The chain runs to 417 residues: Mast cell carboxypeptidase A (417 aa).

A signal peptide spans 1–15 (MRFFLLMAVIYTTLA). Positions 16–109 (IAPVHFDREK…IEKQFDVKDE (94 aa)) are cleaved as a propeptide — activation peptide. Positions 118–412 (KYNDWDKIVS…LSVKFIAKYI (295 aa)) constitute a Peptidase M14 domain. Intrachain disulfides connect cysteine 173-cysteine 186 and cysteine 245-cysteine 268. Zn(2+)-binding residues include histidine 176 and glutamate 179. Histidine 304 lines the Zn(2+) pocket. Glutamate 378 functions as the Proton donor/acceptor in the catalytic mechanism.

This sequence belongs to the peptidase M14 family. The cofactor is Zn(2+).

Its subcellular location is the cytoplasmic vesicle. It is found in the secretory vesicle. It catalyses the reaction Release of a C-terminal amino acid, but little or no action with -Asp, -Glu, -Arg, -Lys or -Pro.. The protein is Mast cell carboxypeptidase A (Cpa3) of Mus musculus (Mouse).